The sequence spans 1063 residues: Kinesin-like protein KIN-7H (1063 aa).

A Kinesin motor domain is found at lysine 18 to valine 342. Glycine 106–threonine 113 lines the ATP pocket. Residues valine 351–threonine 436 are a coiled coil. The interval serine 574–leucine 664 is disordered.

It belongs to the TRAFAC class myosin-kinesin ATPase superfamily. Kinesin family. KIN-7 subfamily.

The protein is Kinesin-like protein KIN-7H of Arabidopsis thaliana (Mouse-ear cress).